A 470-amino-acid polypeptide reads, in one-letter code: Uronate isomerase (470 aa).

This sequence belongs to the metallo-dependent hydrolases superfamily. Uronate isomerase family.

It carries out the reaction D-glucuronate = D-fructuronate. The catalysed reaction is aldehydo-D-galacturonate = keto-D-tagaturonate. It participates in carbohydrate metabolism; pentose and glucuronate interconversion. The protein is Uronate isomerase of Serratia proteamaculans (strain 568).